The chain runs to 362 residues: Serpentine receptor class epsilon-37 (362 aa).

The next 7 membrane-spanning stretches (helical) occupy residues 29 to 49 (IFYV…YILV), 67 to 87 (IMMC…IVLI), 127 to 147 (IYFA…AVLA), 170 to 190 (IPIL…YQTT), 204 to 224 (IFIG…NLAW), 260 to 280 (LVVS…VLLF), and 288 to 308 (FFVH…SLTL).

It belongs to the nematode receptor-like protein sre family.

The protein localises to the membrane. This Caenorhabditis elegans protein is Serpentine receptor class epsilon-37 (sre-37).